We begin with the raw amino-acid sequence, 558 residues long: Formate--tetrahydrofolate ligase (558 aa).

ATP is bound at residue 66-73; sequence TPAGEGKT.

Belongs to the formate--tetrahydrofolate ligase family.

The catalysed reaction is (6S)-5,6,7,8-tetrahydrofolate + formate + ATP = (6R)-10-formyltetrahydrofolate + ADP + phosphate. Its pathway is one-carbon metabolism; tetrahydrofolate interconversion. This Neisseria gonorrhoeae (strain NCCP11945) protein is Formate--tetrahydrofolate ligase.